Consider the following 115-residue polypeptide: Large ribosomal subunit protein bL19 (115 aa).

This sequence belongs to the bacterial ribosomal protein bL19 family.

In terms of biological role, this protein is located at the 30S-50S ribosomal subunit interface and may play a role in the structure and function of the aminoacyl-tRNA binding site. This chain is Large ribosomal subunit protein bL19, found in Syntrophotalea carbinolica (strain DSM 2380 / NBRC 103641 / GraBd1) (Pelobacter carbinolicus).